Reading from the N-terminus, the 264-residue chain is Teichoic acids export ATP-binding protein TagH (264 aa).

Residues Ile-24–Lys-243 enclose the ABC transporter domain. Gly-57–Ser-64 serves as a coordination point for ATP.

This sequence belongs to the ABC transporter superfamily. Teichoic acids exporter (TC 3.A.1.104.1) family. In terms of assembly, the complex is composed of two ATP-binding proteins (TagH) and two transmembrane proteins (TagG).

It localises to the cell membrane. It carries out the reaction ATP + H2O + teichoic acidSide 1 = ADP + phosphate + teichoic acidSide 2.. In terms of biological role, part of the ABC transporter complex TagGH involved in teichoic acids export. Responsible for energy coupling to the transport system. The chain is Teichoic acids export ATP-binding protein TagH from Staphylococcus epidermidis (strain ATCC 35984 / DSM 28319 / BCRC 17069 / CCUG 31568 / BM 3577 / RP62A).